Consider the following 239-residue polypeptide: Flagellar L-ring protein (239 aa).

An N-terminal signal peptide occupies residues 1–16 (MKPVILATASALLLAA). The N-palmitoyl cysteine moiety is linked to residue cysteine 17. Residue cysteine 17 is the site of S-diacylglycerol cysteine attachment. The span at 120-138 (SGSTSGSASGNLGLTGDTS) shows a compositional bias: polar residues. The disordered stretch occupies residues 120-145 (SGSTSGSASGNLGLTGDTSTDGKGKI).

It belongs to the FlgH family. As to quaternary structure, the basal body constitutes a major portion of the flagellar organelle and consists of four rings (L,P,S, and M) mounted on a central rod.

It is found in the cell outer membrane. The protein localises to the bacterial flagellum basal body. Assembles around the rod to form the L-ring and probably protects the motor/basal body from shearing forces during rotation. In Azorhizobium caulinodans (strain ATCC 43989 / DSM 5975 / JCM 20966 / LMG 6465 / NBRC 14845 / NCIMB 13405 / ORS 571), this protein is Flagellar L-ring protein.